Reading from the N-terminus, the 250-residue chain is MSQAAETLDGWYSLHLFYAVDWASLRLAPKDERDALVTELQSFLENTATVRSSKSGDQAIYNITGQKADLLLWFLRPEMKSLNHIENEFNKLRIADFLIPTYSYVSVIELSNYLAGKSDEDPYENPHIKARLYPELPHSDYICFYPMNKRRNETYNWYMLTMEERQKLMYDHGMIGRKYAGKIKQFITGSVGFDDFEWGVTLFSDDVLQFKKIVYEMRFDETTARYGEFGSFFVGHIINTNEFDQFFAIS.

Fe-coproporphyrin III-binding positions include arginine 131, 145 to 149, histidine 172, and glutamine 185; that span reads YPMNK. The active site involves tyrosine 145.

The protein belongs to the ChdC family. Type 1 subfamily. Fe-coproporphyrin III is required as a cofactor.

It carries out the reaction Fe-coproporphyrin III + 2 H2O2 + 2 H(+) = heme b + 2 CO2 + 4 H2O. The enzyme catalyses Fe-coproporphyrin III + H2O2 + H(+) = harderoheme III + CO2 + 2 H2O. It catalyses the reaction harderoheme III + H2O2 + H(+) = heme b + CO2 + 2 H2O. It functions in the pathway porphyrin-containing compound metabolism; protoheme biosynthesis. Involved in coproporphyrin-dependent heme b biosynthesis. Catalyzes the decarboxylation of Fe-coproporphyrin III (coproheme) to heme b (protoheme IX), the last step of the pathway. The reaction occurs in a stepwise manner with a three-propionate intermediate. This Staphylococcus aureus (strain bovine RF122 / ET3-1) protein is Coproheme decarboxylase.